A 206-amino-acid polypeptide reads, in one-letter code: Imidazoleglycerol-phosphate dehydratase (206 aa).

This sequence belongs to the imidazoleglycerol-phosphate dehydratase family.

It is found in the cytoplasm. The enzyme catalyses D-erythro-1-(imidazol-4-yl)glycerol 3-phosphate = 3-(imidazol-4-yl)-2-oxopropyl phosphate + H2O. Its pathway is amino-acid biosynthesis; L-histidine biosynthesis; L-histidine from 5-phospho-alpha-D-ribose 1-diphosphate: step 6/9. This Mycolicibacterium smegmatis (strain ATCC 700084 / mc(2)155) (Mycobacterium smegmatis) protein is Imidazoleglycerol-phosphate dehydratase.